The following is a 458-amino-acid chain: Phosphoglucosamine mutase (458 aa).

Ser-106 functions as the Phosphoserine intermediate in the catalytic mechanism. Ser-106, Asp-247, Asp-249, and Asp-251 together coordinate Mg(2+). A Phosphoserine modification is found at Ser-106.

The protein belongs to the phosphohexose mutase family. Requires Mg(2+) as cofactor. Post-translationally, activated by phosphorylation.

The enzyme catalyses alpha-D-glucosamine 1-phosphate = D-glucosamine 6-phosphate. Its function is as follows. Catalyzes the conversion of glucosamine-6-phosphate to glucosamine-1-phosphate. This Chlamydia caviae (strain ATCC VR-813 / DSM 19441 / 03DC25 / GPIC) (Chlamydophila caviae) protein is Phosphoglucosamine mutase.